The following is a 167-amino-acid chain: uncharacterized protein (167 aa).

A helical membrane pass occupies residues 5 to 27 (LILLTFVSFVFSKTFYYDVYVFF).

It localises to the membrane. This is an uncharacterized protein from Aquifex aeolicus (strain VF5).